A 387-amino-acid polypeptide reads, in one-letter code: Protein salvador homolog 1 (387 aa).

Phosphoserine occurs at positions 95 and 138. WW domains follow at residues leucine 201–glutamate 234 and glutamate 236–alanine 269. Threonine 212 is subject to Phosphothreonine. The SARAH domain occupies isoleucine 323–arginine 370.

In terms of assembly, homodimer. Stabilized through interaction with STK3/MST2 or STK4/MST1. Interacts (via SARAH domain) with isoform 1 of NEK2. Interacts with ESR1 only in the presence of STK3/MST2. Interacts with WTIP and AJUBA. In terms of processing, phosphorylated by STK3/MST2 and STK4/MST1. Phosphorylation is not required for SAV1 stability and may increase the number of protein binding sites on the scaffold molecule.

The protein resides in the nucleus. The protein localises to the cytoplasm. Functionally, regulator of STK3/MST2 and STK4/MST1 in the Hippo signaling pathway which plays a pivotal role in organ size control and tumor suppression by restricting proliferation and promoting apoptosis. The core of this pathway is composed of a kinase cascade wherein STK3/MST2 and STK4/MST1, in complex with its regulatory protein SAV1, phosphorylates and activates LATS1/2 in complex with its regulatory protein MOB1, which in turn phosphorylates and inactivates YAP1 oncoprotein and WWTR1/TAZ. Phosphorylation of YAP1 by LATS1/2 inhibits its translocation into the nucleus to regulate cellular genes important for cell proliferation, cell death, and cell migration. SAV1 is required for STK3/MST2 and STK4/MST1 activation and promotes cell-cycle exit and terminal differentiation in developing epithelial tissues. Plays a role in centrosome disjunction by regulating the localization of NEK2 to centrosomes, and its ability to phosphorylate CROCC and CEP250. In conjunction with STK3/MST2, activates the transcriptional activity of ESR1 through the modulation of its phosphorylation. The chain is Protein salvador homolog 1 from Rattus norvegicus (Rat).